The following is a 129-amino-acid chain: Cocaine- and amphetamine-regulated transcript protein (129 aa).

The N-terminal stretch at Met-1–Ala-27 is a signal peptide. Position 41 is a phosphotyrosine (Tyr-41). Phosphoserine is present on Ser-48. 3 cysteine pairs are disulfide-bonded: Cys-95/Cys-113, Cys-101/Cys-121, and Cys-115/Cys-128.

The protein belongs to the CART family. As to expression, neuroendocrine tissues. Predominantly expressed in the hypothalamus, pituitary, and longitudinal muscle-myenteric plexus. Abundant expression is also seen in the midbrain/thalamus and eye. A lower level expression is seen in the other brain regions and adrenal.

The protein localises to the secreted. Satiety factor closely associated with the actions of leptin and neuropeptide y; this anorectic peptide inhibits both normal and starvation-induced feeding and completely blocks the feeding response induced by neuropeptide Y and regulated by leptin in the hypothalamus. This Rattus norvegicus (Rat) protein is Cocaine- and amphetamine-regulated transcript protein (Cartpt).